The primary structure comprises 121 residues: Ribosome-binding factor A (121 aa).

Belongs to the RbfA family. In terms of assembly, monomer. Binds 30S ribosomal subunits, but not 50S ribosomal subunits or 70S ribosomes.

The protein localises to the cytoplasm. One of several proteins that assist in the late maturation steps of the functional core of the 30S ribosomal subunit. Associates with free 30S ribosomal subunits (but not with 30S subunits that are part of 70S ribosomes or polysomes). Required for efficient processing of 16S rRNA. May interact with the 5'-terminal helix region of 16S rRNA. This chain is Ribosome-binding factor A, found in Clostridium novyi (strain NT).